We begin with the raw amino-acid sequence, 349 residues long: S-adenosylmethionine:tRNA ribosyltransferase-isomerase (349 aa).

Belongs to the QueA family. In terms of assembly, monomer.

It is found in the cytoplasm. The enzyme catalyses 7-aminomethyl-7-carbaguanosine(34) in tRNA + S-adenosyl-L-methionine = epoxyqueuosine(34) in tRNA + adenine + L-methionine + 2 H(+). The protein operates within tRNA modification; tRNA-queuosine biosynthesis. In terms of biological role, transfers and isomerizes the ribose moiety from AdoMet to the 7-aminomethyl group of 7-deazaguanine (preQ1-tRNA) to give epoxyqueuosine (oQ-tRNA). In Pseudomonas putida (strain GB-1), this protein is S-adenosylmethionine:tRNA ribosyltransferase-isomerase.